A 251-amino-acid chain; its full sequence is FHA domain-containing protein FHA1 (251 aa).

An FHA domain is found at 32 to 89; that stretch reads IILGRNSKKSTVDVDLSSLGGGMNISRNHARIFYDFTRRRFSLEVLGKNGCFVEGVLH. A compositionally biased stretch (acidic residues) spans 163–174; sequence EYDDEDDDEEED. The disordered stretch occupies residues 163-209; that stretch reads EYDDEDDDEEEDIRGSGKKTWRDGHEGVYASGEKKREGRSKADREAD. A compositionally biased stretch (basic and acidic residues) spans 182–206; the sequence is TWRDGHEGVYASGEKKREGRSKADR.

Expressed in roots and vascular tissues near the shoot apex in young seedlings.

Its subcellular location is the nucleus. In terms of biological role, may play a role in the control of plant organ development. Does not show transactivation activity in yeast. In Arabidopsis thaliana (Mouse-ear cress), this protein is FHA domain-containing protein FHA1.